The chain runs to 302 residues: Bifunctional phosphoglucose/phosphomannose isomerase (302 aa).

An SIS domain is found at 27–160 (VEGEVVRIEA…KVYGIDVKIP (134 aa)). Residues Gly47, Ser48, Ser87, Ser89, Thr92, and Arg135 each contribute to the D-fructose 6-phosphate site. 6 residues coordinate D-glucose 6-phosphate: Gly47, Ser48, Ser87, Ser89, Thr92, and Arg135. Glu203 (proton acceptor) is an active-site residue. His219 and Lys298 together coordinate D-fructose 6-phosphate. 2 residues coordinate D-glucose 6-phosphate: His219 and Lys298. Residue His219 is the Proton donor of the active site. Residue Lys298 is the Proton acceptor of the active site.

The protein belongs to the PGI/PMI family. Homodimer.

The protein resides in the cytoplasm. It catalyses the reaction alpha-D-glucose 6-phosphate = beta-D-fructose 6-phosphate. The catalysed reaction is D-mannose 6-phosphate = D-fructose 6-phosphate. Its activity is regulated as follows. Inhibited by 5-phosphoarabinonate (PAB) and 6-phosphogluconate. Dual specificity isomerase that catalyzes the isomerization of both glucose-6-phosphate and mannose-6-phosphate to fructose-6-phosphate with similar catalytic efficiency. The chain is Bifunctional phosphoglucose/phosphomannose isomerase from Pyrobaculum aerophilum (strain ATCC 51768 / DSM 7523 / JCM 9630 / CIP 104966 / NBRC 100827 / IM2).